The chain runs to 835 residues: Toll-like receptor 4 (835 aa).

A signal peptide spans 1-25; the sequence is MMPLLHLAGTLIMALFLSCLRPGSL. Topologically, residues 26–638 are extracellular; that stretch reads NPCIEVLPNI…KTIISVSVVS (613 aa). A disulfide bridge connects residues cysteine 28 and cysteine 39. Residues asparagine 34, asparagine 43, and asparagine 75 are each glycosylated (N-linked (GlcNAc...) asparagine). LRR repeat units follow at residues 54–75, 78–99, 102–123, 126–147, and 150–171; these read STKN…SFTN, QLQW…AWHG, QLST…SFSG, NLEN…HIGQ, and SLKK…EYFS. Residue asparagine 172 is glycosylated (N-linked (GlcNAc...) asparagine). LRR repeat units lie at residues 175–198, 204–224, and 226–247; these read NLEH…QFLR, NLSL…AFQG, and RLHE…MCLQ. N-linked (GlcNAc...) asparagine glycans are attached at residues asparagine 204, asparagine 237, asparagine 248, asparagine 281, and asparagine 307. Cysteine 280 and cysteine 304 are joined by a disulfide. One copy of the LRR 9 repeat lies at 372-381; the sequence is SLRYLDLSRN. A disulfide bridge links cysteine 388 with cysteine 389. 4 LRR repeats span residues 398–420, 421–442, 446–467, and 470–491; these read NLKY…MGLE, ELEY…SVFL, KLLY…IFLG, and SLNT…NVFT. Residues asparagine 492, asparagine 495, and asparagine 524 are each glycosylated (N-linked (GlcNAc...) asparagine). 3 LRR repeats span residues 495 to 516, 519 to 540, and 543 to 564; these read NLTF…VFDT, RLQL…HYKQ, and SLRT…LQHF. N-linked (GlcNAc...) asparagine glycosylation is found at asparagine 572 and asparagine 575. The region spanning 576-627 is the LRRCT domain; that stretch reads NSVACICEYQNFLQWVKDQKMFLVNVEQMKCASPIDMKASLVLDFTNSTCYI. 2 disulfides stabilise this stretch: cysteine 580-cysteine 606 and cysteine 582-cysteine 625. The N-linked (GlcNAc...) asparagine glycan is linked to asparagine 622. A helical membrane pass occupies residues 639 to 659; that stretch reads VLVVATVAFLIYHFYFHLILI. At 660–835 the chain is on the cytoplasmic side; the sequence is AGCKKYSRGE…EEEQEATTLT (176 aa). The TIR domain occupies 670 to 813; that stretch reads SIYDAFVIYS…IFWRRLKKAL (144 aa).

It belongs to the Toll-like receptor family. As to quaternary structure, belongs to the lipopolysaccharide (LPS) receptor, a multi-protein complex containing at least CD14, LY96 and TLR4. Binding to bacterial LPS leads to homodimerization. Interacts with LY96 via the extracellular domain. Interacts with MYD88 and TIRAP via their respective TIR domains. Interacts with TICAM2. Interacts with NOX4. Interacts with CNPY3 and HSP90B1; this interaction is required for proper folding in the endoplasmic reticulum. Interacts with MAP3K21; this interaction leads to negative regulation of TLR4 signaling. Interacts with CD36, following CD36 stimulation by oxLDL or amyloid-beta 42, and forms a heterodimer with TLR6. The trimeric complex is internalized and triggers inflammatory response. LYN kinase activity facilitates TLR4-TLR6 heterodimerization and signal initiation. Interacts with TICAM1 in response to LPS in a WDFY1-dependent manner. Interacts with WDFY1 in response to LPS. Interacts with SMPDL3B. Interacts with CEACAM1; upon lipopolysaccharide stimulation, forms a complex including TLR4 and the phosphorylated form of SYK and CEACAM1, which in turn, recruits PTPN6 that dephosphorylates SYK, reducing the production of reactive oxygen species (ROS) and lysosome disruption, which in turn, reduces the activity of the inflammasome. Interacts with RFTN1; the interaction occurs in response to lipopolysaccharide stimulation. Interacts with SCIMP; the interaction occurs in response to lipopolysaccharide stimulation and is enhanced by phosphorylation of SCIMP by LYN. This interaction facilitates the phosphorylation of TLR4 by LYN which elicits a selective cytokine response in macrophages. Interacts with TRAF3IP3. Interacts with TREM1; this interaction enhances TLR4-mediated inflammatory response. Interacts with ZG16B/PAUF. Interacts with CD82; this interaction inhibits TLR4-mediated signaling pathway. Phosphorylated on tyrosine residues by LYN after binding lipopolysaccharide. In terms of processing, ubiquitinated by RNF128 via 'Lys-28'-linked polyubiquitin chains, leading to proteasomal degradation.

The protein resides in the cell membrane. Its subcellular location is the early endosome. The protein localises to the cell projection. It localises to the ruffle. Its function is as follows. Transmembrane receptor that functions as a pattern recognition receptor recognizing pathogen- and damage-associated molecular patterns (PAMPs and DAMPs) to induce innate immune responses via downstream signaling pathways. At the plasma membrane, cooperates with LY96 to mediate the innate immune response to bacterial lipopolysaccharide (LPS). Also involved in LPS-independent inflammatory responses triggered by free fatty acids, such as palmitate, and Ni(2+). Mechanistically, acts via MYD88, TIRAP and TRAF6, leading to NF-kappa-B activation, cytokine secretion and the inflammatory response. Alternatively, CD14-mediated TLR4 internalization via endocytosis is associated with the initiation of a MYD88-independent signaling via the TICAM1-TBK1-IRF3 axis leading to type I interferon production. In addition to the secretion of proinflammatory cytokines, initiates the activation of NLRP3 inflammasome and formation of a positive feedback loop between autophagy and NF-kappa-B signaling cascade. In complex with TLR6, promotes inflammation in monocytes/macrophages by associating with TLR6 and the receptor CD86. Upon ligand binding, such as oxLDL or amyloid-beta 42, the TLR4:TLR6 complex is internalized and triggers inflammatory response, leading to NF-kappa-B-dependent production of CXCL1, CXCL2 and CCL9 cytokines, via MYD88 signaling pathway, and CCL5 cytokine, via TICAM1 signaling pathway. In myeloid dendritic cells, vesicular stomatitis virus glycoprotein G but not LPS promotes the activation of IRF7, leading to type I IFN production in a CD14-dependent manner. The sequence is that of Toll-like receptor 4 (Tlr4) from Rattus norvegicus (Rat).